Consider the following 142-residue polypeptide: MAKKVDGYIKLQVAAGAANPSPPVGPALGQKGVNIMEFCKAFNARTEKFDKGMPIPVVITVYTDRSFTFETKTPPASFLLLKAAGLKSGSGRPNTDKVGTIKRSAVQEIAETKAADMTGADMDAMMRSIEGTARSMGLVVED.

Belongs to the universal ribosomal protein uL11 family. Part of the ribosomal stalk of the 50S ribosomal subunit. Interacts with L10 and the large rRNA to form the base of the stalk. L10 forms an elongated spine to which L12 dimers bind in a sequential fashion forming a multimeric L10(L12)X complex. Post-translationally, one or more lysine residues are methylated.

In terms of biological role, forms part of the ribosomal stalk which helps the ribosome interact with GTP-bound translation factors. The polypeptide is Large ribosomal subunit protein uL11 (Shewanella piezotolerans (strain WP3 / JCM 13877)).